A 209-amino-acid chain; its full sequence is Chaperone protein TorD (209 aa).

This sequence belongs to the TorD/DmsD family. TorD subfamily.

It is found in the cytoplasm. Functionally, involved in the biogenesis of TorA. Acts on TorA before the insertion of the molybdenum cofactor and, as a result, probably favors a conformation of the apoenzyme that is competent for acquiring the cofactor. The chain is Chaperone protein TorD from Shewanella baltica (strain OS155 / ATCC BAA-1091).